The sequence spans 601 residues: Proline--tRNA ligase (601 aa).

Belongs to the class-II aminoacyl-tRNA synthetase family. ProS type 1 subfamily. In terms of assembly, homodimer.

The protein resides in the cytoplasm. It catalyses the reaction tRNA(Pro) + L-proline + ATP = L-prolyl-tRNA(Pro) + AMP + diphosphate. Catalyzes the attachment of proline to tRNA(Pro) in a two-step reaction: proline is first activated by ATP to form Pro-AMP and then transferred to the acceptor end of tRNA(Pro). As ProRS can inadvertently accommodate and process non-cognate amino acids such as alanine and cysteine, to avoid such errors it has two additional distinct editing activities against alanine. One activity is designated as 'pretransfer' editing and involves the tRNA(Pro)-independent hydrolysis of activated Ala-AMP. The other activity is designated 'posttransfer' editing and involves deacylation of mischarged Ala-tRNA(Pro). The misacylated Cys-tRNA(Pro) is not edited by ProRS. The polypeptide is Proline--tRNA ligase (Picosynechococcus sp. (strain ATCC 27264 / PCC 7002 / PR-6) (Agmenellum quadruplicatum)).